Here is a 440-residue protein sequence, read N- to C-terminus: MSEFSQTVPELVAWARKNDFSISLPVDRLSFLLAVATLNGERLDGEMSEGELVDAFRHVSDAFEQTSETIGVRANNAINDMVRQRLLNRFTSEQAEGNAIYRLTPLGIGITDYYIRQREFSTLRLSMQLSIVAGELKRAADAAEEGGDEFHWHRNVYAPLKYSVAEIFDSIDLTQRLMDEQQQQVKDDIAQLLNKDWRAAISSCELLLSETSGTLRELQDTLEAAGDKLQANLLRIQDATMTHDDLHFVDRLVFDLQSKLDRIISWGQQSIDLWIGYDRHVHKFIRTAIDMDKNRVFAQRLRQSVQTYFDEPWALTYANADRLLDMRDEEMALRDEEVTGELPEDLEYEEFNEIREQLAAIIEEQLAVYKTRQVPLDLGLVVREYLAQYPRARHFDVARIVIDQAVRLGVAQADFTGLPAKWQPINDYGAKVQAHVIDKY.

The leucine-zipper stretch occupies residues Leu208–Ile236.

The protein belongs to the MukF family. Interacts, and probably forms a ternary complex, with MukE and MukB via its C-terminal region. The complex formation is stimulated by calcium or magnesium. It is required for an interaction between MukE and MukB.

It is found in the cytoplasm. The protein resides in the nucleoid. Functionally, involved in chromosome condensation, segregation and cell cycle progression. May participate in facilitating chromosome segregation by condensation DNA from both sides of a centrally located replisome during cell division. Not required for mini-F plasmid partitioning. Probably acts via its interaction with MukB and MukE. Overexpression results in anucleate cells. It has a calcium binding activity. The protein is Chromosome partition protein MukF of Escherichia fergusonii (strain ATCC 35469 / DSM 13698 / CCUG 18766 / IAM 14443 / JCM 21226 / LMG 7866 / NBRC 102419 / NCTC 12128 / CDC 0568-73).